The primary structure comprises 366 residues: Aminomethyltransferase (366 aa).

It belongs to the GcvT family. In terms of assembly, the glycine cleavage system is composed of four proteins: P, T, L and H.

It catalyses the reaction N(6)-[(R)-S(8)-aminomethyldihydrolipoyl]-L-lysyl-[protein] + (6S)-5,6,7,8-tetrahydrofolate = N(6)-[(R)-dihydrolipoyl]-L-lysyl-[protein] + (6R)-5,10-methylene-5,6,7,8-tetrahydrofolate + NH4(+). Functionally, the glycine cleavage system catalyzes the degradation of glycine. The sequence is that of Aminomethyltransferase from Thermosynechococcus vestitus (strain NIES-2133 / IAM M-273 / BP-1).